A 236-amino-acid chain; its full sequence is NLP effector protein 3 (236 aa).

The first 19 residues, 1–19 (MNLLGFLAVVALSTASVQA), serve as a signal peptide directing secretion. The short motif at 103–113 (AIMYSWYFPKD) is the Conserved undecapeptide motif I element. Positions 120 to 126 (GHRHDWE) match the Hepta-peptide GHRHDWE motif II motif.

This sequence belongs to the Necrosis inducing protein (NPP1) family.

It is found in the secreted. Secreted effector that contributes to virulence during infection by P.capsici. Induces distinct chlorosis at 3 days after inoculation of host C.annuum leaves, and all the chlorotic areas gradually turn brown and become moderately necrotic at 7 days after inoculation. Leads only to chlorotic areas, without necrosis at 7 days after non-host N.benthamiana leaves infection. Induces cell death in hot pepper. This Phytophthora capsici protein is NLP effector protein 3.